Consider the following 827-residue polypeptide: 4-hydroxy-3-methylbut-2-enyl diphosphate reductase (827 aa).

A 4-hydroxy-3-methylbut-2-enyl diphosphate reductase region spans residues 1 to 284 (MEIIRAKHMG…MNIEKKVRGI (284 aa)). A [4Fe-4S] cluster-binding site is contributed by cysteine 12. Residues histidine 40 and histidine 79 each contribute to the (2E)-4-hydroxy-3-methylbut-2-enyl diphosphate site. Residues histidine 40 and histidine 79 each coordinate dimethylallyl diphosphate. Residues histidine 40 and histidine 79 each contribute to the isopentenyl diphosphate site. Cysteine 101 provides a ligand contact to [4Fe-4S] cluster. Histidine 129 lines the (2E)-4-hydroxy-3-methylbut-2-enyl diphosphate pocket. Histidine 129 serves as a coordination point for dimethylallyl diphosphate. Position 129 (histidine 129) interacts with isopentenyl diphosphate. Glutamate 131 (proton donor) is an active-site residue. A (2E)-4-hydroxy-3-methylbut-2-enyl diphosphate-binding site is contributed by threonine 168. [4Fe-4S] cluster is bound at residue cysteine 196. (2E)-4-hydroxy-3-methylbut-2-enyl diphosphate-binding residues include serine 224, serine 225, asparagine 226, and serine 268. Positions 224, 225, 226, and 268 each coordinate dimethylallyl diphosphate. Residues serine 224, serine 225, asparagine 226, and serine 268 each coordinate isopentenyl diphosphate. S1 motif domains are found at residues 477 to 545 (GQIV…LSIK), 562 to 632 (DDEI…LGIK), 649 to 716 (DTVI…GSLK), and 733 to 802 (GTTV…LSIK).

It in the N-terminal section; belongs to the IspH family. [4Fe-4S] cluster is required as a cofactor.

It catalyses the reaction isopentenyl diphosphate + 2 oxidized [2Fe-2S]-[ferredoxin] + H2O = (2E)-4-hydroxy-3-methylbut-2-enyl diphosphate + 2 reduced [2Fe-2S]-[ferredoxin] + 2 H(+). The enzyme catalyses dimethylallyl diphosphate + 2 oxidized [2Fe-2S]-[ferredoxin] + H2O = (2E)-4-hydroxy-3-methylbut-2-enyl diphosphate + 2 reduced [2Fe-2S]-[ferredoxin] + 2 H(+). Its pathway is isoprenoid biosynthesis; dimethylallyl diphosphate biosynthesis; dimethylallyl diphosphate from (2E)-4-hydroxy-3-methylbutenyl diphosphate: step 1/1. It participates in isoprenoid biosynthesis; isopentenyl diphosphate biosynthesis via DXP pathway; isopentenyl diphosphate from 1-deoxy-D-xylulose 5-phosphate: step 6/6. Its function is as follows. Catalyzes the conversion of 1-hydroxy-2-methyl-2-(E)-butenyl 4-diphosphate (HMBPP) into a mixture of isopentenyl diphosphate (IPP) and dimethylallyl diphosphate (DMAPP). Acts in the terminal step of the DOXP/MEP pathway for isoprenoid precursor biosynthesis. The protein is 4-hydroxy-3-methylbut-2-enyl diphosphate reductase of Fusobacterium nucleatum subsp. nucleatum (strain ATCC 25586 / DSM 15643 / BCRC 10681 / CIP 101130 / JCM 8532 / KCTC 2640 / LMG 13131 / VPI 4355).